Here is a 339-residue protein sequence, read N- to C-terminus: Phenylalanine--tRNA ligase alpha subunit (339 aa).

Residue Glu-250 participates in Mg(2+) binding.

This sequence belongs to the class-II aminoacyl-tRNA synthetase family. Phe-tRNA synthetase alpha subunit type 1 subfamily. In terms of assembly, tetramer of two alpha and two beta subunits. It depends on Mg(2+) as a cofactor.

The protein localises to the cytoplasm. The enzyme catalyses tRNA(Phe) + L-phenylalanine + ATP = L-phenylalanyl-tRNA(Phe) + AMP + diphosphate + H(+). The polypeptide is Phenylalanine--tRNA ligase alpha subunit (Bacteroides thetaiotaomicron (strain ATCC 29148 / DSM 2079 / JCM 5827 / CCUG 10774 / NCTC 10582 / VPI-5482 / E50)).